A 200-amino-acid polypeptide reads, in one-letter code: Recombination protein RecR (200 aa).

The C4-type zinc-finger motif lies at 57–72 (CRQCRTLTEQELCPQC). The Toprim domain occupies 80–175 (TQLCVVEGPT…AATRIAHGVP (96 aa)).

Belongs to the RecR family.

May play a role in DNA repair. It seems to be involved in an RecBC-independent recombinational process of DNA repair. It may act with RecF and RecO. In Pseudomonas putida (strain GB-1), this protein is Recombination protein RecR.